Reading from the N-terminus, the 609-residue chain is Replication protein A 70 kDa DNA-binding subunit (609 aa).

The interval 113 to 163 is disordered; the sequence is GNPQPYNDGQPQPAAPAPASAPAPAPSKLQNNSAPPPSMNRGTSKLFGGGS. Over residues 125–137 the composition is skewed to pro residues; the sequence is PAAPAPASAPAPA. Residues 188–272 constitute a DNA-binding region (OB); that stretch reads WTVRARVTNK…VKNDYEMTFN (85 aa). Residues 472-494 form a C4-type zinc finger; the sequence is CPSQDCNKKVIDQQNGLFRCEKC.

Belongs to the replication factor A protein 1 family. As to quaternary structure, component of the heterotrimeric canonical replication protein A complex (RPA). Interacts with rpain-a.

It is found in the nucleus. The protein localises to the PML body. As part of the heterotrimeric replication protein A complex (RPA/RP-A), binds and stabilizes single-stranded DNA intermediates, that form during DNA replication or upon DNA stress. It prevents their reannealing and in parallel, recruits and activates different proteins and complexes involved in DNA metabolism. Thereby, it plays an essential role both in DNA replication and the cellular response to DNA damage. The sequence is that of Replication protein A 70 kDa DNA-binding subunit (rpa1) from Xenopus laevis (African clawed frog).